Consider the following 132-residue polypeptide: Small ribosomal subunit protein uS8c (132 aa).

The protein belongs to the universal ribosomal protein uS8 family. Part of the 30S ribosomal subunit.

Its subcellular location is the plastid. It is found in the chloroplast. In terms of biological role, one of the primary rRNA binding proteins, it binds directly to 16S rRNA central domain where it helps coordinate assembly of the platform of the 30S subunit. This Physcomitrium patens (Spreading-leaved earth moss) protein is Small ribosomal subunit protein uS8c (rps8).